Here is a 569-residue protein sequence, read N- to C-terminus: Falcipain-1 (569 aa).

Residues 1–35 (MVAIKEMKEFAFARPSLVETLNKKKKFLKKKEKRT) are Cytoplasmic-facing. A propeptide spans 1 to 332 (MVAIKEMKEF…KRNEKDIFSK (332 aa)) (activation peptide). A helical; Signal-anchor for type II membrane protein transmembrane segment spans residues 36–56 (FVLSIYAFITFIIFCIGILYF). Residues 57-569 (TNKSSAHNNN…IGEEVFYPIL (513 aa)) lie on the Lumenal side of the membrane. N-linked (GlcNAc...) asparagine glycosylation is found at N58, N98, N121, and N127. The segment at 97-118 (LNESSNEEDEEKYTLNSETYNN) is disordered. Intrachain disulfides connect C354–C395, C388–C428, and C413–C433. C357 is a catalytic residue. N-linked (GlcNAc...) asparagine glycans are attached at residues N479 and N487. C482 and C558 are joined by a disulfide. Active-site residues include H488 and N533.

This sequence belongs to the peptidase C1 family. In terms of processing, contains disulfide bonds.

It localises to the membrane. The protein localises to the cytoplasmic granule. Its function is as follows. Cysteine protease. In the mosquito midgut, required for parasite development. This Plasmodium falciparum (isolate 3D7) protein is Falcipain-1.